Here is a 432-residue protein sequence, read N- to C-terminus: Glutamyl-tRNA reductase (432 aa).

Substrate-binding positions include 49–52 (TCNR), serine 101, 106–108 (EPQ), and glutamine 112. Cysteine 50 functions as the Nucleophile in the catalytic mechanism. 181–186 (GAGETI) is an NADP(+) binding site. Positions 407 to 432 (FPEKPGYQHPPIATPIVRTDDADPAP) are disordered.

This sequence belongs to the glutamyl-tRNA reductase family. In terms of assembly, homodimer.

The enzyme catalyses (S)-4-amino-5-oxopentanoate + tRNA(Glu) + NADP(+) = L-glutamyl-tRNA(Glu) + NADPH + H(+). Its pathway is porphyrin-containing compound metabolism; protoporphyrin-IX biosynthesis; 5-aminolevulinate from L-glutamyl-tRNA(Glu): step 1/2. Its function is as follows. Catalyzes the NADPH-dependent reduction of glutamyl-tRNA(Glu) to glutamate 1-semialdehyde (GSA). The polypeptide is Glutamyl-tRNA reductase (Xanthomonas oryzae pv. oryzae (strain PXO99A)).